Reading from the N-terminus, the 658-residue chain is MSDDMSMGSPSSAGEQGVLRSMQEVAMSSQEASKMLRTYNIAWWGNNYYDVNELGHISVCPDPDVPEARVDLAKLVKAREAQGQRLPALFCFPQILQHRLRSINAAFKRARESYGYNGDYFLVYPIKVNQHRRVIESLIHSGEPLGLEAGSKAELMAVLAHAGMTRSVIVCNGYKDREYIRLALIGEKMGHKVYLVIEKMSEIAIVLEEAERLNVVPRLGVRARLASQGSGKWQSSGGEKSKFGLAATQVLQLVETLRDAGRLDSLQLLHFHLGSQMANIRDIATGVRESARFYVELHKLGVNIQCFDVGGGLGVDYEGTRSQSDCSVNYGLNEYANNIIWAIGDACEEHGLPHPTVITESGRAVTAHHTVLVSNIIGVERNEYTDPTAPAEDAPRALQNLWETWQEMHKPGTRRSLREWLHDSQMDLHDIHIGYSSGAFSLQERAWAEQLYLSMCHEVQKQLDPQNRAHRPIIDELQERMADKMYVNFSLFQSMPDAWGIDQLFPVLPLEGLDQVPERRAVLLDITCDSDGAIDHYIDGDGIATTMPMPEYDPENPPMLGFFMVGAYQEILGNMHNLFGDTEAVDVFVFPDGSVEVELSDEGDTVADMLQYVQLDPKTLLTHFRDQVKQTDLDDALQQQFLEEFEAGLYGYTYLEDE.

An N6-(pyridoxal phosphate)lysine modification is found at K127. 307–317 (FDVGGGLGVDY) is a substrate binding site.

This sequence belongs to the Orn/Lys/Arg decarboxylase class-II family. SpeA subfamily. Requires Mg(2+) as cofactor. Pyridoxal 5'-phosphate is required as a cofactor.

It catalyses the reaction L-arginine + H(+) = agmatine + CO2. It participates in amine and polyamine biosynthesis; agmatine biosynthesis; agmatine from L-arginine: step 1/1. In terms of biological role, catalyzes the biosynthesis of agmatine from arginine. This is Biosynthetic arginine decarboxylase from Salmonella typhi.